The primary structure comprises 762 residues: N,N-dimethylformamidase beta subunit (762 aa).

As to quaternary structure, heterotetramer of two DmfA1 (alpha) and two DmfA2 (beta) subunits.

It carries out the reaction N,N-dimethylformamide + H2O = dimethylamine + formate. Activity is slightly inhibited by Mg(2+) and Mn(2+), and slightly increased by Cu(2+). Activity is slightly inhibited by the chelating agents 8-hydroxyquinoline, ethylenediaminetetraacetate, o-phenanthroline and 2,2'-bipyridyl. Functionally, hydrolyzes N,N-dimethylformamide, and to a lesser extent N,N-dimethylacetamide and N,N-diethylacetamide. Has no activity against the substituted amides N-methylformamide, N-ethylformamide, N-ethylformamide and N-methylacetamide or the unsubstituted amides formamide, nicotinamide, acetoamide, benzamide, acetamide and acrylamide. This chain is N,N-dimethylformamidase beta subunit, found in Alcaligenes sp.